Here is a 687-residue protein sequence, read N- to C-terminus: Follicle-stimulating hormone receptor (687 aa).

Residues 1–17 (MALLLVSLLAFLSLGSG) form the signal peptide. Residues 18 to 46 (CHHQVCHYSNRVFLCQESKVTEIPSDLPR) form the LRRNT domain. The Extracellular portion of the chain corresponds to 18 to 358 (CHHQVCHYSN…EDIMGYDILR (341 aa)). Cys23 and Cys32 are joined by a disulfide. 9 LRR repeats span residues 49–72 (LELRFVLTKLRVIPKGAFSGFGDL), 73–97 (KKIEISQNDVLEVIEANVFSNLPKL), 98–118 (HEIRIEKANNLLYIDHDAFQN), 119–143 (LPNLQYLLISNTGIKHLPAVHKIQS), 144–169 (LQKVLLDIQDNINIHIVERNSFMGLS), 170–192 (FESMILRLSKNGIQEIHNCAFNG), 193–216 (TQLDELNLSDNNNLEELPNDVFQG), 217–240 (ASGPVILDISGTRIHSLPNYGLEN), and 241–259 (LKKLRARSTYNLKKLPSLE). N-linked (GlcNAc...) asparagine glycosylation is found at Asn191 and Asn199. 4 disulfide bridges follow: Cys275-Cys338, Cys276-Cys292, Cys276-Cys348, and Cys292-Cys330. Asn293 is a glycosylation site (N-linked (GlcNAc...) asparagine). At Tyr327 the chain carries Sulfotyrosine. Residues 359 to 379 (VLIWFISILAITGNIIVLVIL) traverse the membrane as a helical segment. Residues 380–390 (ITSQYKLTVPR) lie on the Cytoplasmic side of the membrane. Residues 391 to 413 (FLMCNLAFADLCIGIYLLLIASV) form a helical membrane-spanning segment. The Extracellular segment spans residues 414-435 (DIHTKSQYHNYAIDWQTGAGCD). A disulfide bridge links Cys434 with Cys509. A helical transmembrane segment spans residues 436–457 (AAGFFTVFGSELSVYTLTAITL). Over 458 to 477 (ERWHTITHAMQLECKVQLRH) the chain is Cytoplasmic. The helical transmembrane segment at 478-500 (AASVMLVGWIFGFGVGLLPIFGI) threads the bilayer. Residues 501-520 (STYMKVSICLPMDIDSPLSQ) are Extracellular-facing. Residues 521 to 542 (LYVMSLLVLNVLAFVVICGCYT) form a helical membrane-spanning segment. The Cytoplasmic segment spans residues 543-565 (HIYLTVRNPNIVSSSSDTKIAKR). Residues 566-589 (MGILIFTDFLCMAPISFFGISASL) traverse the membrane as a helical segment. Over 590–600 (KVALITVSKSK) the chain is Extracellular. Residues 601–622 (ILLVLFYPINSCANPFLYAIFT) traverse the membrane as a helical segment. Residues 623 to 687 (KNFRRDFFIL…LVPLSHLAQN (65 aa)) are Cytoplasmic-facing.

This sequence belongs to the G-protein coupled receptor 1 family. FSH/LSH/TSH subfamily. Homotrimer. Functions as a homotrimer binding the FSH hormone heterodimer composed of CGA and FSHB. Interacts with ARRB2. Interacts with APPL2; interaction is independent of follicle stimulating hormone stimulation. In terms of processing, N-glycosylated; indirectly required for FSH-binding, possibly via a conformational change that allows high affinity binding of hormone. Post-translationally, sulfated.

The protein localises to the cell membrane. G protein-coupled receptor for follitropin, the follicle-stimulating hormone. Through cAMP production activates the downstream PI3K-AKT and ERK1/ERK2 signaling pathways. The protein is Follicle-stimulating hormone receptor (FSHR) of Equus asinus (Donkey).